A 368-amino-acid chain; its full sequence is MAAASEERMAEEGGGGHGDGGSPSAIASTQRLPPPPPPQPPQPGSQAPPAPALAPDQLPQNNTLVALPIVAIENILSFMSYDEISQLRLVCKRMDLVCQRMLNQGFLKVERYHNLCQKQVKAQLPRRESERRNHSLARHADILAAVETRLSLLNMTFMKYVDSNLCCFIPGKVIDEIYRVLRYVNSTRAPQRAHEVLQELRDISSMAMEYFDEKIVPILKRKLPGSDVSGRLMGSPPVPGPSAALTTMQLFSKQNPSRQEVTKLQQQVKTNGAGVTVLRREISELRTKVQEQQKQLQDQDQKLLEQTQIIGEQNARLAELERKLREVMESAVGNSSGSGQSEESPRKRKKAAEAIDSLRKSKRLRNRK.

Positions 1 to 11 (MAAASEERMAE) are enriched in basic and acidic residues. Positions 1-57 (MAAASEERMAEEGGGGHGDGGSPSAIASTQRLPPPPPPQPPQPGSQAPPAPALAPDQ) are disordered. Residues 12-21 (EGGGGHGDGG) are compositionally biased toward gly residues. Residues 32 to 52 (LPPPPPPQPPQPGSQAPPAPA) are compositionally biased toward pro residues. The region spanning 61 to 109 (NNTLVALPIVAIENILSFMSYDEISQLRLVCKRMDLVCQRMLNQGFLKV) is the F-box domain. 2 positions are modified to phosphoserine: serine 235 and serine 242. Residue threonine 270 is modified to Phosphothreonine. The disordered stretch occupies residues 328–368 (MESAVGNSSGSGQSEESPRKRKKAAEAIDSLRKSKRLRNRK). Phosphoserine is present on serine 344.

Part of a SCF (SKP1-cullin-F-box) protein ligase complex.

It localises to the chromosome. The protein resides in the centromere. Its subcellular location is the kinetochore. In terms of biological role, probably recognizes and binds to some phosphorylated proteins and promotes their ubiquitination and degradation. This is F-box only protein 28 (FBXO28) from Bos taurus (Bovine).